We begin with the raw amino-acid sequence, 294 residues long: tRNA pseudouridine synthase B (294 aa).

Catalysis depends on Asp38, which acts as the Nucleophile.

Belongs to the pseudouridine synthase TruB family. Type 1 subfamily.

The enzyme catalyses uridine(55) in tRNA = pseudouridine(55) in tRNA. In terms of biological role, responsible for synthesis of pseudouridine from uracil-55 in the psi GC loop of transfer RNAs. This Clostridium perfringens (strain ATCC 13124 / DSM 756 / JCM 1290 / NCIMB 6125 / NCTC 8237 / Type A) protein is tRNA pseudouridine synthase B.